The sequence spans 423 residues: Protein FAM43A (423 aa).

Acidic residues predominate over residues 263–283 (EQELQEEEEEEQPEGCPEEEE). Disordered stretches follow at residues 263–298 (EQEL…EAEA), 321–344 (RGEA…LLLG), and 382–423 (LSGD…PHSG). Positions 323–335 (EALGGGGGSLGPG) are enriched in gly residues. The span at 383–393 (SGDSTGSESSI) shows a compositional bias: low complexity. The span at 401–411 (TSATAGDSSRQ) shows a compositional bias: polar residues.

This sequence belongs to the FAM43 family.

The sequence is that of Protein FAM43A (FAM43A) from Homo sapiens (Human).